A 274-amino-acid polypeptide reads, in one-letter code: 2,3,4,5-tetrahydropyridine-2,6-dicarboxylate N-succinyltransferase (274 aa).

R104 and D141 together coordinate substrate.

The protein belongs to the transferase hexapeptide repeat family. As to quaternary structure, homotrimer.

It localises to the cytoplasm. It catalyses the reaction (S)-2,3,4,5-tetrahydrodipicolinate + succinyl-CoA + H2O = (S)-2-succinylamino-6-oxoheptanedioate + CoA. It functions in the pathway amino-acid biosynthesis; L-lysine biosynthesis via DAP pathway; LL-2,6-diaminopimelate from (S)-tetrahydrodipicolinate (succinylase route): step 1/3. This is 2,3,4,5-tetrahydropyridine-2,6-dicarboxylate N-succinyltransferase from Shewanella frigidimarina (strain NCIMB 400).